A 334-amino-acid polypeptide reads, in one-letter code: Procathepsin L (334 aa).

An N-terminal signal peptide occupies residues 1 to 17; sequence MTPLLLLAVLCLGTALA. Positions 18–113 are cleaved as a propeptide — activation peptide; the sequence is TPKFDQTFNA…RLFQEPLMLQ (96 aa). E122 lines the Zn(2+) pocket. Cystine bridges form between C135-C178 and C169-C211. Residue C138 is part of the active site. E163, D184, E199, E205, D227, D250, H253, D273, and D275 together coordinate Zn(2+). C269 and C322 form a disulfide bridge. Residue H276 is part of the active site. Residues 289-290 constitute a propeptide that is removed on maturation; that stretch reads DS. Residue N300 is part of the active site.

It belongs to the peptidase C1 family. Dimer of a heavy and a light chain linked by disulfide bonds. Interacts with Long isoform of CD74/Ii chain; the interaction stabilizes the conformation of mature CTSL. In terms of processing, during export along the endocytic pathway, pro-CTSL undergoes several proteolytic cleavages to generate the CTSL single-chain and two-chain mature forms, composed of a heavy chain linked to a light chain by disulfide bonds. Autocleavage; produces the single-chain CTSL after cleavage of the propeptide. The cleavage can be intermolecular. Both mature cathepsin L1 and procathepsin L are found in the upper epidermis. The lower epidermis predominantly contains procathepsin L. In seminiferous tubules expression is greater at stages VI-VII than at stages IX-XII.

The protein resides in the lysosome. It is found in the apical cell membrane. It localises to the cytoplasmic vesicle. Its subcellular location is the secretory vesicle. The protein localises to the chromaffin granule. The protein resides in the secreted. It is found in the extracellular space. It catalyses the reaction Specificity close to that of papain. As compared to cathepsin B, cathepsin L exhibits higher activity toward protein substrates, but has little activity on Z-Arg-Arg-NHMec, and no peptidyl-dipeptidase activity.. With respect to regulation, inhibited by the propeptide produced by autocleavage. Long isoform of CD74/Ii chain stabilizes the conformation of mature CTSL by binding to its active site and serving as a chaperone to help maintain a pool of mature enzyme in endocytic compartments and extracellular space of APCs. IFNG enhances the conversion into the CTSL mature and active form. Inhibited by CST6. Inhibited by the glycopeptide antibiotic teicoplanin. Inhibited by amantadine. Its function is as follows. Thiol protease important for the overall degradation of proteins in lysosomes. Plays a critical for normal cellular functions such as general protein turnover, antigen processing and bone remodeling. Involved in the solubilization of cross-linked TG/thyroglobulin and in the subsequent release of thyroid hormone thyroxine (T4) by limited proteolysis of TG/thyroglobulin in the thyroid follicle lumen. In neuroendocrine chromaffin cells secretory vesicles, catalyzes the prohormone proenkephalin processing to the active enkephalin peptide neurotransmitter. In thymus, regulates CD4(+) T cell positive selection by generating the major histocompatibility complex class II (MHCII) bound peptide ligands presented by cortical thymic epithelial cells. Also mediates invariant chain processing in cortical thymic epithelial cells. Major elastin-degrading enzyme at neutral pH. Accumulates as a mature and active enzyme in the extracellular space of antigen presenting cells (APCs) to regulate degradation of the extracellular matrix in the course of inflammation. Secreted form generates endostatin from COL18A1. Critical for cardiac morphology and function. Plays an important role in hair follicle morphogenesis and cycling, as well as epidermal differentiation. Required for maximal stimulation of steroidogenesis by TIMP1. This chain is Procathepsin L, found in Rattus norvegicus (Rat).